We begin with the raw amino-acid sequence, 103 residues long: Large ribosomal subunit protein bL21 (103 aa).

The protein belongs to the bacterial ribosomal protein bL21 family. As to quaternary structure, part of the 50S ribosomal subunit. Contacts protein L20.

Functionally, this protein binds to 23S rRNA in the presence of protein L20. The sequence is that of Large ribosomal subunit protein bL21 from Shigella sonnei (strain Ss046).